The primary structure comprises 264 residues: Ubiquinone biosynthesis protein COQ4 homolog, mitochondrial (264 aa).

A mitochondrion-targeting transit peptide spans 1 to 26; sequence MMQRCWQISLPLARRRLIPSLTSKRT. Residues His169, Asp170, His173, and Glu185 each contribute to the Zn(2+) site.

Belongs to the COQ4 family. Component of a multi-subunit COQ enzyme complex. Requires Zn(2+) as cofactor.

It is found in the mitochondrion inner membrane. The enzyme catalyses a 4-hydroxy-3-methoxy-5-(all-trans-polyprenyl)benzoate + H(+) = a 2-methoxy-6-(all-trans-polyprenyl)phenol + CO2. The protein operates within cofactor biosynthesis; ubiquinone biosynthesis. Functionally, lyase that catalyzes the C1-decarboxylation of 4-hydroxy-3-methoxy-5-(all-trans-polyprenyl)benzoic acid into 2-methoxy-6-(all-trans-polyprenyl)phenol during ubiquinone biosynthesis. This chain is Ubiquinone biosynthesis protein COQ4 homolog, mitochondrial, found in Drosophila grimshawi (Hawaiian fruit fly).